The sequence spans 165 residues: Nucleotide-binding protein Syncc9605_0652 (165 aa).

This sequence belongs to the YajQ family.

In terms of biological role, nucleotide-binding protein. The protein is Nucleotide-binding protein Syncc9605_0652 of Synechococcus sp. (strain CC9605).